Reading from the N-terminus, the 432-residue chain is Cysteine desulfurase, mitosomal (432 aa).

Residues A102 to T103, Q212, and C232 to H234 contribute to the pyridoxal 5'-phosphate site. K235 is modified (N6-(pyridoxal phosphate)lysine). T272 contacts pyridoxal 5'-phosphate. C357 (cysteine persulfide intermediate) is an active-site residue. Residue C357 coordinates [2Fe-2S] cluster.

This sequence belongs to the class-V pyridoxal-phosphate-dependent aminotransferase family. NifS/IscS subfamily. Pyridoxal 5'-phosphate serves as cofactor.

The protein localises to the mitosome. It carries out the reaction (sulfur carrier)-H + L-cysteine = (sulfur carrier)-SH + L-alanine. Its function is as follows. Catalyzes the removal of elemental sulfur from cysteine to produce alanine. It supplies the inorganic sulfur for iron-sulfur (Fe-S) clusters in mitosomes. The protein is Cysteine desulfurase, mitosomal of Encephalitozoon cuniculi (strain GB-M1) (Microsporidian parasite).